The sequence spans 595 residues: Actin-histidine N-methyltransferase (595 aa).

The segment at 1-22 is disordered; it reads MGKKSRVKTQKSGTGATATVSP. Residues 10–20 show a composition bias toward polar residues; sequence QKSGTGATATV. S-adenosyl-L-methionine is bound by residues R75, 104–106, R254, 275–279, and 325–327; these read EGF, DMCNH, and SGF. The SET domain occupies 94–314; that stretch reads EGFEMVNFKE…AGEQIYIFYG (221 aa). S513 is subject to Phosphoserine. A disordered region spans residues 552–595; that stretch reads LVNGENCIPNGTRSENEDLNQEENKRAVEDAKGSSSDSTDAVKK. Positions 573–583 are enriched in basic and acidic residues; that stretch reads EENKRAVEDAK. Residues 584-595 show a composition bias toward polar residues; that stretch reads GSSSDSTDAVKK.

The protein belongs to the class V-like SAM-binding methyltransferase superfamily. SETD3 actin-histidine methyltransferase family. Interacts with MYOD1. In terms of processing, phosphorylated by GSK3B, which is required for recognition by the SCF(FBXW7) complex and subsequent degradation. Post-translationally, ubiquitinated by the SCF(FBXW7) complex following phosphorylation by GSK3B, leading to its degradation by the proteasome.

It localises to the cytoplasm. The protein resides in the nucleus. It catalyses the reaction L-histidyl-[protein] + S-adenosyl-L-methionine = N(tele)-methyl-L-histidyl-[protein] + S-adenosyl-L-homocysteine + H(+). Its function is as follows. Protein-histidine N-methyltransferase that specifically mediates 3-methylhistidine (tele-methylhistidine) methylation of actin at 'His-73'. Histidine methylation of actin is required for smooth muscle contraction of the laboring uterus during delivery. Does not have protein-lysine N-methyltransferase activity and probably only catalyzes histidine methylation of actin. The protein is Actin-histidine N-methyltransferase of Otolemur garnettii (Small-eared galago).